The following is a 427-amino-acid chain: O-methyltransferase FrzF (427 aa).

Asp281 contacts S-adenosyl-L-methionine. His327 acts as the Proton acceptor in catalysis.

This sequence belongs to the class I-like SAM-binding methyltransferase superfamily. Cation-independent O-methyltransferase family. As to quaternary structure, homodimer.

The catalysed reaction is (1S,4S)-4-[(4-hydroxyphenyl)methyl]-2,5-diazaspiro[bicyclo[3.2.1]octane-6,1'-cyclohexan]-4'-one + S-adenosyl-L-methionine = (1S,4S)-4-[(4-methoxyphenyl)methyl]-2,5-diazaspiro[bicyclo[3.2.1]octane-6,1'-cyclohexan]-4'-one + S-adenosyl-L-homocysteine + H(+). The enzyme catalyses (1S,4S)-4-[(4-hydroxyphenyl)methyl]-2-methyl-2,5-diazaspiro[bicyclo[3.2.1]octane-6,1'-cyclohexan]-4'-one + S-adenosyl-L-methionine = (1S,4S)-4-[(4-methoxyphenyl)methyl]-2-methyl-2,5-diazaspiro[bicyclo[3.2.1]octane-6,1'-cyclohexan]-4'-one + S-adenosyl-L-homocysteine + H(+). Its pathway is secondary metabolite biosynthesis. Its function is as follows. O-methyltransferase; part of the gene cluster that mediates the biosynthesis of the alkaloid (-)-FR901483, a potent immunosuppressant that shows efficacy in animal models and a probable inhibitor of purine nucleotide biosynthesis by targeting phosphoribosylpyrophosphate amidotransferase (PPAT). Within the pathway, FrzF methylates the phenolic oxygen at position C4. The biosynthesis of (-)-FR901483 starts with the condensation of two L-tyrosines to yield (S,S)-dityrosyl-piperazine. This process occurs in 3 steps with the non-canonical nonribosomal peptide synthetase FrzA catalyzing the reduction of L-tyrosine into L-tyrosinal, the spontaneous condensation of 2 L-tyrosinal units, and the subsequent reduction by the NmrA-like family domain-containing oxidoreductase FrzB. The cytochrome P450 monooxygenase FrzC then performs coupling between N10 and C1' to morph the piperazine into a 1,4-diazabicyclo[3.2.1]octane spiro-fused to a 2,5-cyclohexadienone. The dienone portion is further reduced to cyclohexanone by the flavin-dependent reductase FrzD. The methyltranserases (MTs) FrzE and FrzF are then involved in the methylation at the C10' amine and the C4 phenolic oxygen, respectively. The order of the two MTs appear to be interchangeable. Cleavage of the C9-N10' bond by the dioxygenase FrzG then leads to formation of a conjugated iminium. In addition to the oxidation of C9, an additional dehydrogenation between C7 and C8 can occur to give a likely shunt product. The next biosynthetic step is the intramolecular aldol condensation catalyzed by the newly identified aldolase FrzH to yield an aza-tricyclic product with the formation of a C9-C3' bond. The short-chain dehydrogenase/reductase FrzI then produces dephospho-(-)-FR901483 that is phosphorylated at C4'-OH into (-)-FR901483 by the phosphotransferase FrzJ. This is O-methyltransferase FrzF from Cladobotryum sp.